The sequence spans 453 residues: Odorant receptor 83a (453 aa).

Over 1-28 (MKSTFKEERIKDDSKRRDLFVFVRQTMC) the chain is Cytoplasmic. Residues 29 to 49 (IAAMYPFGYYVNGSGVLAVLV) form a helical membrane-spanning segment. At 50–85 (RFCDLTYELFNYFVSVHIAGLYICTIYINYGQGDLD) the chain is on the extracellular side. Residues 86 to 106 (FFVNCLIQTIIYLWTIAMKLY) traverse the membrane as a helical segment. Topologically, residues 107–148 (FRRFRPGLLNTILSNINDEYETRSAVGFSFVTMAGSYRMSKL) are cytoplasmic. Residues 149–169 (WIKTYVYCCYIGTIFWLALPI) form a helical membrane-spanning segment. Over 170 to 203 (AYRDRSLPLACWYPFDYTQPGVYEVVFLLQAMGQ) the chain is Extracellular. The chain crosses the membrane as a helical span at residues 204–224 (IQVAASFASSSGLHMVLCVLI). The Cytoplasmic segment spans residues 225–322 (SGQYDVLFCS…ALKKIESFYS (98 aa)). The chain crosses the membrane as a helical span at residues 323–343 (PIWFVKIGEVTFLMCLVAFVS). Residues 344 to 359 (TKSTAANSFMRMVSLG) are Extracellular-facing. The chain crosses the membrane as a helical span at residues 360-380 (QYLLLVLYELFIICYFADIVF). Over 381–408 (QNSQRCGEALWRSPWQRHLKDVRSDYMF) the chain is Cytoplasmic. The chain crosses the membrane as a helical span at residues 409–429 (FMLNSRRQFQLTAGKISNLNV). Topologically, residues 430–453 (DRFRGTITTAFSFLTLLQKMDARE) are extracellular.

This sequence belongs to the insect chemoreceptor superfamily. Heteromeric odorant receptor channel (TC 1.A.69) family. Or2a subfamily. Interacts with Orco. Complexes exist early in the endomembrane system in olfactory sensory neurons (OSNs), coupling these complexes to the conserved ciliary trafficking pathway.

It localises to the cell membrane. Its function is as follows. Odorant receptor which mediates acceptance or avoidance behavior, depending on its substrates. The odorant receptor repertoire encodes a large collection of odor stimuli that vary widely in identity, intensity, and duration. May form a complex with Orco to form odorant-sensing units, providing sensitive and prolonged odorant signaling and calcium permeability. Involved in the behavioral responses to pentanol, ethyl acetate, and propyl acetate. This is Odorant receptor 83a (Or83a) from Drosophila melanogaster (Fruit fly).